A 452-amino-acid polypeptide reads, in one-letter code: Acetyl-CoA decarbonylase/synthase complex subunit delta (452 aa).

Belongs to the CdhD family. In terms of assembly, heterodimer of delta and gamma chains. The ACDS complex is made up of alpha, epsilon, beta, gamma and delta chains with a probable stoichiometry of (alpha(2)epsilon(2))(4)-beta(8)-(gamma(1)delta(1))(8).

Its function is as follows. Part of a complex that catalyzes the reversible cleavage of acetyl-CoA, allowing autotrophic growth from CO(2). Probably maintains the overall quaternary structure of the ACDS complex. This is Acetyl-CoA decarbonylase/synthase complex subunit delta from Archaeoglobus fulgidus (strain ATCC 49558 / DSM 4304 / JCM 9628 / NBRC 100126 / VC-16).